The primary structure comprises 66 residues: MLCLPVFIILLLLASPAAPKSLETRIQNDLIRAGLTDADLKTEKGFLSGLLNVAGSVCCKVDTSCC.

The N-terminal stretch at 1-19 (MLCLPVFIILLLLASPAAP) is a signal peptide. A propeptide spanning residues 20–54 (KSLETRIQNDLIRAGLTDADLKTEKGFLSGLLNVA) is cleaved from the precursor.

The protein belongs to the conotoxin T superfamily. In terms of processing, contains 2 disulfide bonds that can be either 'C1-C3, C2-C4' or 'C1-C4, C2-C3', since these disulfide connectivities have been observed for conotoxins with cysteine framework V (for examples, see AC P0DQQ7 and AC P81755). Expressed by the venom duct.

The protein localises to the secreted. The protein is Conotoxin Lt5.6 of Conus litteratus (Lettered cone).